The sequence spans 433 residues: uncharacterized protein (433 aa).

This sequence belongs to the mimivirus R160 family.

The protein resides in the virion. This is an uncharacterized protein from Acanthamoeba polyphaga mimivirus (APMV).